The primary structure comprises 489 residues: MSFRKVVRQSKFRHVFGQPVKNDQCYEDIRVSRVTWDSTFCAVNPKFLAVIVEASGGGAFLVLPLSKTGRIDKAYPTVCGHTGPVLDIDWCPHNDEVIASGSEDCTVMVWQIPENGLTSPLTEPVVVLEGHTKRVGIIAWHPTARNVLLSAGCDNVVLIWNVGTAEELYRLDSLHPDLIYNVSWNRNGSLFCSACKDKSVRIIDPRQGTLVAEREKAHEGARPMRAIFLADGKVFTTGFSRMSERQLALWDPENLEEPMALQELDSSNGALLPFYDPDTSVVYVCGKGDSSIRYFEITEEPPYIHFLNTFTSKEPQRGMGSMPKRGLEVSKCEIARFYKLHERKCEPIVMTVPRKSDLFQDDLYPDTAGPEAALEAEEWVSGRDADPILISLREAYVPSKQRDLKISRRNVLSDSRPAMAPGSSRLGAPASTTAAADATPSGSLARAGEAGKLEEVMQELRALRALVKEQGERICRLEEQLGRMENGDA.

At S2 the chain carries Phosphoserine. 5 WD repeats span residues 80-120 (GHTG…LTSP), 130-170 (GHTK…ELYR), 174-213 (LHPD…LVAE), 217-260 (AHEG…EPMA), and 265-305 (DSSN…PYIH). Residues 414 to 443 (DSRPAMAPGSSRLGAPASTTAAADATPSGS) are disordered. Low complexity predominate over residues 427–443 (GAPASTTAAADATPSGS). Residues 449-474 (EAGKLEEVMQELRALRALVKEQGERI) adopt a coiled-coil conformation.

Belongs to the WD repeat coronin family. Forms homooligomers, but does not form complexes with the other coronins. Interacts with Arp2/3 complex components, including ACTR2, ARPC1B and ARPC2. Binds actin. Phosphorylation on Ser-2 regulates the interaction with the Arp2/3 complex and cell motility in fibroblasts. Phosphorylation does not seem to affect subcellular location.

The protein localises to the cytoplasm. It localises to the cytoskeleton. It is found in the stress fiber. In terms of biological role, regulates leading edge dynamics and cell motility in fibroblasts. May be involved in cytokinesis and signal transduction. This is Coronin-1B (CORO1B) from Pongo abelii (Sumatran orangutan).